Consider the following 180-residue polypeptide: Stathmin-3 (180 aa).

2 S-palmitoyl cysteine lipidation sites follow: Cys-22 and Cys-24. Residues 38 to 180 enclose the SLD domain; that stretch reads GDMEVKQLDK…NKEQREEMSG (143 aa). Phosphoserine occurs at positions 50, 60, 65, 68, 72, 73, and 81. Residues 59–82 are disordered; that stretch reads KSPSDLSPESPMLSSPPKKKDTSL. The span at 60–74 shows a compositional bias: low complexity; it reads SPSDLSPESPMLSSP. Residues 76–179 adopt a coiled-coil conformation; it reads KKKDTSLEEL…RNKEQREEMS (104 aa).

It belongs to the stathmin family. In terms of assembly, interacts with STAT3. Interacts with CLU (secreted form); this interaction may act as an important modulator during neuronal differentiation. N-terminal palmitoylation promotes specific anchoring to the cytosolic leaflet of Golgi membranes and subsequent vesicular trafficking along dendrites and axons. Neuronal Stathmins are substrates for palmitoyltransferases ZDHHC3, ZDHHC7 and ZDHHC15.

Its subcellular location is the golgi apparatus. It localises to the cell projection. The protein resides in the growth cone. The protein localises to the axon. It is found in the cytoplasm. Its subcellular location is the cytosol. Its function is as follows. Exhibits microtubule-destabilizing activity, which is antagonized by STAT3. The chain is Stathmin-3 (STMN3) from Macaca fascicularis (Crab-eating macaque).